A 74-amino-acid polypeptide reads, in one-letter code: MASSTVPVSAAGSANETPEIPDNVGDWLRGVYRFATDRNDFRRNLILNLGLFAAGVWLARNLSDIDLMAPQPGV.

The span at 1 to 16 (MASSTVPVSAAGSANE) shows a compositional bias: polar residues. The disordered stretch occupies residues 1 to 22 (MASSTVPVSAAGSANETPEIPD). Ala-2 is subject to N-acetylalanine.

This sequence belongs to the Tom6 family. Forms part of the preprotein translocase complex of the outer mitochondrial membrane (TOM complex) which consists of at least 7 different proteins (TOMM5, TOMM6, TOMM7, TOMM20, TOMM22, TOMM40 and TOMM70).

The protein resides in the mitochondrion outer membrane. The polypeptide is Mitochondrial import receptor subunit TOM6 homolog (TOMM6) (Homo sapiens (Human)).